We begin with the raw amino-acid sequence, 317 residues long: Beta-ketoacyl-[acyl-carrier-protein] synthase III (317 aa).

Catalysis depends on residues cysteine 112 and histidine 244. The interval 245–249 is ACP-binding; that stretch reads QANLR. The active site involves asparagine 274.

Belongs to the thiolase-like superfamily. FabH family. Homodimer.

It localises to the cytoplasm. The enzyme catalyses malonyl-[ACP] + acetyl-CoA + H(+) = 3-oxobutanoyl-[ACP] + CO2 + CoA. The protein operates within lipid metabolism; fatty acid biosynthesis. In terms of biological role, catalyzes the condensation reaction of fatty acid synthesis by the addition to an acyl acceptor of two carbons from malonyl-ACP. Catalyzes the first condensation reaction which initiates fatty acid synthesis and may therefore play a role in governing the total rate of fatty acid production. Possesses both acetoacetyl-ACP synthase and acetyl transacylase activities. Its substrate specificity determines the biosynthesis of branched-chain and/or straight-chain of fatty acids. The chain is Beta-ketoacyl-[acyl-carrier-protein] synthase III from Sodalis glossinidius (strain morsitans).